The primary structure comprises 327 residues: DNA-directed RNA polymerase subunit alpha (327 aa).

Positions 1 to 227 (MLIAHRPTLI…ELFGLARELN (227 aa)) are alpha N-terminal domain (alpha-NTD). Positions 244–327 (SDEDLRIPIE…GSYFDPNYGS (84 aa)) are alpha C-terminal domain (alpha-CTD).

The protein belongs to the RNA polymerase alpha chain family. Homodimer. The RNAP catalytic core consists of 2 alpha, 1 beta, 1 beta' and 1 omega subunit. When a sigma factor is associated with the core the holoenzyme is formed, which can initiate transcription.

It catalyses the reaction RNA(n) + a ribonucleoside 5'-triphosphate = RNA(n+1) + diphosphate. Its function is as follows. DNA-dependent RNA polymerase catalyzes the transcription of DNA into RNA using the four ribonucleoside triphosphates as substrates. This Tropheryma whipplei (strain TW08/27) (Whipple's bacillus) protein is DNA-directed RNA polymerase subunit alpha.